Here is a 72-residue protein sequence, read N- to C-terminus: MSELFSVPYFIENLKQHIEMNQSEDKIHAMNSYYRSVVSTLVQDQLTKNAVVLKRIQHLDEAYNKVKRGESK.

This is an uncharacterized protein from Bacillus subtilis (strain 168).